The chain runs to 356 residues: GLTIRAGSYADELVKTAKTIASPGRGILAMDESNATCGKRLASIGLENTEVNRQAWRTLLVTVPTLGEYISGAILFEETLYQSTTDGRKIVDVLIEQNIIPGIKVDKGLVPLAGSNDESWCQGLDGLASRSAAYYQQGARFAKWRTVVSIPNGPSALAVKEAAWGLARYAAISQDNGLVPIVEPEILLDGEHGIDRTFEVAQKVWAEVFYYLAENNVQFEGILLKPSMVTPGAESKDKASPTKVAEYTLNLLHRRIPPAVPGIMFLSGGQSEVEATLNLNAMNKSPNPWHVSFSYARALQNTALKTWGGLPENVKAAQEALLFRAKSNSLAQLGKYYGDGESEEAKKELFVKGYSY.

Residues 1 to 6 (GLTIRA) constitute a chloroplast transit peptide. Residues Arg53 and Lys143 each coordinate substrate. The active-site Proton acceptor is Glu183. The active-site Schiff-base intermediate with dihydroxyacetone-P is Lys225.

This sequence belongs to the class I fructose-bisphosphate aldolase family.

The protein localises to the plastid. It localises to the chloroplast. It catalyses the reaction beta-D-fructose 1,6-bisphosphate = D-glyceraldehyde 3-phosphate + dihydroxyacetone phosphate. Its pathway is carbohydrate degradation; glycolysis; D-glyceraldehyde 3-phosphate and glycerone phosphate from D-glucose: step 4/4. This chain is Fructose-bisphosphate aldolase 1, chloroplastic, found in Pisum sativum (Garden pea).